Here is a 153-residue protein sequence, read N- to C-terminus: Two-component response regulator ARR17 (153 aa).

A Response regulatory domain is found at 21–149 (HVLAVDDNLI…DVEKLKCHLL (129 aa)). D82 is modified (4-aspartylphosphate).

The protein belongs to the ARR family. Type-A subfamily. In terms of processing, two-component system major event consists of a His-to-Asp phosphorelay between a sensor histidine kinase (HK) and a response regulator (RR). In plants, the His-to-Asp phosphorelay involves an additional intermediate named Histidine-containing phosphotransfer protein (HPt). This multistep phosphorelay consists of a His-Asp-His-Asp sequential transfer of a phosphate group between first a His and an Asp of the HK protein, followed by the transfer to a conserved His of the HPt protein and finally the transfer to an Asp in the receiver domain of the RR protein.

Its subcellular location is the nucleus. In terms of biological role, functions as a response regulator involved in His-to-Asp phosphorelay signal transduction system. Phosphorylation of the Asp residue in the receiver domain activates the ability of the protein to promote the transcription of target genes. Type-A response regulators seem to act as negative regulators of the cytokinin signaling. The protein is Two-component response regulator ARR17 (ARR17) of Arabidopsis thaliana (Mouse-ear cress).